The chain runs to 333 residues: Autoinducer 2 import system permease protein LsrD (333 aa).

The next 10 membrane-spanning stretches (helical) occupy residues 7 to 27 (YGWE…FGIA), 45 to 65 (ICIG…GIDI), 70 to 90 (TIGL…PMAA), 91 to 111 (AIPL…ALIL), 118 to 138 (LVIT…LSGI), 162 to 182 (LFGL…CWLF), 212 to 232 (TLYL…IVLV), 240 to 260 (SDLG…GGAN), 261 to 281 (IYGG…IGYL), and 288 to 308 (AGVP…IAVV).

It belongs to the binding-protein-dependent transport system permease family. AraH/RbsC subfamily. The complex is composed of two ATP-binding proteins (LsrA), two transmembrane proteins (LsrC and LsrD) and a solute-binding protein (LsrB).

It is found in the cell inner membrane. In terms of biological role, part of the ABC transporter complex LsrABCD involved in autoinducer 2 (AI-2) import. Probably responsible for the translocation of the substrate across the membrane. The protein is Autoinducer 2 import system permease protein LsrD (lsrD) of Photorhabdus luminescens (Xenorhabdus luminescens).